A 476-amino-acid chain; its full sequence is Serine carboxypeptidase 2 (476 aa).

The N-terminal stretch at 1–34 (MRTTTRRLPPAPAAAAVLLAALTCLLLRPAAVAA) is a signal peptide. Intrachain disulfides connect C97–C353, C254–C266, and C290–C320. N-linked (GlcNAc...) asparagine glycosylation is found at N148 and N159. The active site involves S190. A glycan (N-linked (GlcNAc...) asparagine) is linked at N291. Positions 295 to 313 (SSSSSSLSRRRTRGRYPWL) are cleaved as a propeptide — linker peptide. Residue T314 is modified to Blocked amino end (Thr). N-linked (GlcNAc...) asparagine glycosylation is found at N341 and N347. Residue N352 is glycosylated (N-linked (GlcNAc...) asparagine; partial). N352 carries O-linked (GalNAc...) threonine; in variant 351-AT-352 glycosylation. Residues D390 and H443 contribute to the active site. N472 is a glycosylation site (N-linked (GlcNAc...) asparagine).

It belongs to the peptidase S10 family. In terms of assembly, carboxypeptidase II is a dimer, where each monomer is composed of two chains linked by a disulfide bond.

The protein localises to the secreted. It carries out the reaction Preferential release of a C-terminal arginine or lysine residue.. Its function is as follows. May be involved in the degradation of small peptides (2-5 residues) or in the degradation of storage proteins in the embryo. This is Serine carboxypeptidase 2 (CBP2) from Hordeum vulgare (Barley).